The following is a 217-amino-acid chain: Elongation factor Ts (217 aa).

The segment at 81–84 (TDFV) is involved in Mg(2+) ion dislocation from EF-Tu.

It belongs to the EF-Ts family.

The protein localises to the cytoplasm. In terms of biological role, associates with the EF-Tu.GDP complex and induces the exchange of GDP to GTP. It remains bound to the aminoacyl-tRNA.EF-Tu.GTP complex up to the GTP hydrolysis stage on the ribosome. In Myxococcus xanthus (strain DK1622), this protein is Elongation factor Ts.